A 369-amino-acid chain; its full sequence is Histidinol-phosphate aminotransferase 2 (369 aa).

N6-(pyridoxal phosphate)lysine is present on lysine 231.

This sequence belongs to the class-II pyridoxal-phosphate-dependent aminotransferase family. Histidinol-phosphate aminotransferase subfamily. In terms of assembly, homodimer. It depends on pyridoxal 5'-phosphate as a cofactor.

The enzyme catalyses L-histidinol phosphate + 2-oxoglutarate = 3-(imidazol-4-yl)-2-oxopropyl phosphate + L-glutamate. Its pathway is amino-acid biosynthesis; L-histidine biosynthesis; L-histidine from 5-phospho-alpha-D-ribose 1-diphosphate: step 7/9. This Legionella pneumophila (strain Lens) protein is Histidinol-phosphate aminotransferase 2.